The sequence spans 370 residues: Proline-rich protein 5-like (370 aa).

Serine 28 is subject to Phosphoserine. Disordered regions lie at residues 312–346 (LGEE…LDSP) and 351–370 (LEDV…ASLS).

This sequence belongs to the PROTOR family. In terms of assembly, interacts with the mammalian target of rapamycin complex 2 (mTORC2) which contains MTOR, MLST8, PRR5, RICTOR, MAPKAP1 and DEPTOR. Interacts with RFFL. Interacts (via C-terminus) with ZFP36 (via C-terminus); this interaction may accelerate ZFP36-mediated mRNA decay during stress. Interacts with RICTOR. Ubiquitinated. Ubiquitination by RFFL promotes proteasomal degradation of PRR5L thereby modifying the substrate-specific activity of the mTORC2 complex. Ubiquitination by RFFL is stimulated by LPA/lysophosphatidic acid.

In terms of biological role, associates with the mTORC2 complex that regulates cellular processes including survival and organization of the cytoskeleton. Regulates the activity of the mTORC2 complex in a substrate-specific manner preventing for instance the specific phosphorylation of PKCs and thereby controlling cell migration. Plays a role in the stimulation of ZFP36-mediated mRNA decay of several ZFP36-associated mRNAs, such as TNF-alpha and GM-CSF, in response to stress. Required for ZFP36 localization to cytoplasmic stress granule (SG) and P-body (PB) in response to stress. This Mus musculus (Mouse) protein is Proline-rich protein 5-like (Prr5l).